A 493-amino-acid polypeptide reads, in one-letter code: Probable cytosol aminopeptidase (493 aa).

Mn(2+) contacts are provided by Lys257 and Asp262. Lys269 is an active-site residue. 3 residues coordinate Mn(2+): Asp280, Asp339, and Glu341. The active site involves Arg343.

The protein belongs to the peptidase M17 family. Mn(2+) is required as a cofactor.

It is found in the cytoplasm. The catalysed reaction is Release of an N-terminal amino acid, Xaa-|-Yaa-, in which Xaa is preferably Leu, but may be other amino acids including Pro although not Arg or Lys, and Yaa may be Pro. Amino acid amides and methyl esters are also readily hydrolyzed, but rates on arylamides are exceedingly low.. It carries out the reaction Release of an N-terminal amino acid, preferentially leucine, but not glutamic or aspartic acids.. In terms of biological role, presumably involved in the processing and regular turnover of intracellular proteins. Catalyzes the removal of unsubstituted N-terminal amino acids from various peptides. This chain is Probable cytosol aminopeptidase (pepA), found in Aquifex aeolicus (strain VF5).